We begin with the raw amino-acid sequence, 280 residues long: 4-diphosphocytidyl-2-C-methyl-D-erythritol kinase (280 aa).

Lys8 is a catalytic residue. Position 91-101 (91-101 (PIEAGLAGGSS)) interacts with ATP. Asp133 is an active-site residue.

This sequence belongs to the GHMP kinase family. IspE subfamily.

The enzyme catalyses 4-CDP-2-C-methyl-D-erythritol + ATP = 4-CDP-2-C-methyl-D-erythritol 2-phosphate + ADP + H(+). The protein operates within isoprenoid biosynthesis; isopentenyl diphosphate biosynthesis via DXP pathway; isopentenyl diphosphate from 1-deoxy-D-xylulose 5-phosphate: step 3/6. In terms of biological role, catalyzes the phosphorylation of the position 2 hydroxy group of 4-diphosphocytidyl-2C-methyl-D-erythritol. The protein is 4-diphosphocytidyl-2-C-methyl-D-erythritol kinase of Clostridium tetani (strain Massachusetts / E88).